Here is a 252-residue protein sequence, read N- to C-terminus: MGGQGKAINRKRKFVGRKADDPEFDLDKKQFKVLHLNATEKRLIIVLEGAQLETVKVHNTFELLNCDDHAGIMRKNQRDPGSCRPDITHQCLLMLFDSPLNRAGLLQVFVRTEHNVLIEINPQTRIPRTFKRFAGLMVQLLHKFQIRANDSSRRLMSVIKNPITDHVPVGCKKYAMSFSGKLLPNCRDLVPHGDETSASYDEPVVIVIGAFAHGVLKTDYTEELFSISNYPLSAAIACSKICSAFEEVWGVV.

S-adenosyl-L-methionine is bound by residues methionine 176, glycine 209, glycine 214, and 227–232; that span reads ISNYPL.

The protein belongs to the class IV-like SAM-binding methyltransferase superfamily. RNA methyltransferase NEP1 family. In terms of assembly, homodimer. Part of the small subunit (SSU) processome, composed of more than 70 proteins and the RNA chaperone small nucleolar RNA (snoRNA) U3.

It is found in the nucleus. It localises to the nucleolus. It carries out the reaction a pseudouridine in rRNA + S-adenosyl-L-methionine = an N(1)-methylpseudouridine in rRNA + S-adenosyl-L-homocysteine + H(+). In terms of biological role, S-adenosyl-L-methionine-dependent pseudouridine N(1)-methyltransferase that methylates a pseudouridine in 18S rRNA. Involved the biosynthesis of the hypermodified N1-methyl-N3-(3-amino-3-carboxypropyl) pseudouridine (m1acp3-Psi) conserved in eukaryotic 18S rRNA. Also has an essential role in 40S ribosomal subunit biogenesis independent on its methyltransferase activity, facilitating the incorporation of ribosomal protein S19 during the formation of pre-ribosomes. S-adenosyl-L-methionine-dependent pseudouridine N(1)-methyltransferase that methylates pseudouridine at position in 18S rRNA. Involved the biosynthesis of the hypermodified N1-methyl-N3-(3-amino-3-carboxypropyl) pseudouridine (m1acp3-Psi) conserved in eukaryotic 18S rRNA. Is not able to methylate uridine at this position. Also has an essential role in 40S ribosomal subunit biogenesis independent on its methyltransferase activity, facilitating the incorporation of ribosomal protein S19 during the formation of pre-ribosomes. Part of the small subunit (SSU) processome, first precursor of the small eukaryotic ribosomal subunit. During the assembly of the SSU processome in the nucleolus, many ribosome biogenesis factors, an RNA chaperone and ribosomal proteins associate with the nascent pre-rRNA and work in concert to generate RNA folding, modifications, rearrangements and cleavage as well as targeted degradation of pre-ribosomal RNA by the RNA exosome. In Drosophila melanogaster (Fruit fly), this protein is Ribosomal RNA small subunit methyltransferase NEP1.